Consider the following 523-residue polypeptide: 26S proteasome regulatory subunit RPN3 (523 aa).

Ala2 is modified (N-acetylalanine). Residues 270–450 (ARYFFYLSKI…GFIETTELLN (181 aa)) form the PCI domain. Ser454 bears the Phosphoserine mark. The span at 480-495 (RYPEDKKTQQNEKSEN) shows a compositional bias: basic and acidic residues. The tract at residues 480–523 (RYPEDKKTQQNEKSENGENDDDTLDGDLMDDMSDISDLDDLGFL) is disordered. A compositionally biased stretch (acidic residues) spans 496-523 (GENDDDTLDGDLMDDMSDISDLDDLGFL).

The protein belongs to the proteasome subunit S3 family. As to quaternary structure, the 26S proteasome is composed of a core protease, known as the 20S proteasome, capped at one or both ends by the 19S regulatory complex (RC). The RC is composed of at least 18 different subunits in two subcomplexes, the base and the lid, which form the portions proximal and distal to the 20S proteolytic core, respectively. Post-translationally, N-acetylated by NAT1.

In terms of biological role, acts as a regulatory subunit of the 26S proteasome which is involved in the ATP-dependent degradation of ubiquitinated proteins. The protein is 26S proteasome regulatory subunit RPN3 (RPN3) of Saccharomyces cerevisiae (strain ATCC 204508 / S288c) (Baker's yeast).